The chain runs to 468 residues: Aldehyde dehydrogenase family 3 member B1 (468 aa).

Met1 is modified (N-acetylmethionine). 188 to 193 (GNAYVG) contacts NAD(+). Active-site residues include Glu210 and Cys244. S-palmitoyl cysteine attachment occurs at residues Cys462 and Cys463. Cysteine methyl ester is present on Cys465. A lipid anchor (S-geranylgeranyl cysteine) is attached at Cys465. Positions 466-468 (TLL) are cleaved as a propeptide — removed in mature form.

Belongs to the aldehyde dehydrogenase family. In terms of processing, dually lipidated in the C-terminus; prenylation occurs prior to, and is a prerequisite for palmitoylation. It is also required for activity towards long-chain substrates. Highly expressed in kidney and liver. In brain is expressed at moderate levels in cortex, striatum and hippocampus, and at lower levels in brainstem and cerebellum.

The protein localises to the cell membrane. The enzyme catalyses an aldehyde + NAD(+) + H2O = a carboxylate + NADH + 2 H(+). It catalyses the reaction a long-chain fatty aldehyde + NAD(+) + H2O = a long-chain fatty acid + NADH + 2 H(+). The catalysed reaction is a medium-chain fatty aldehyde + NAD(+) + H2O = a medium-chain fatty acid + NADH + 2 H(+). It carries out the reaction octanal + NAD(+) + H2O = octanoate + NADH + 2 H(+). The enzyme catalyses nonanal + NAD(+) + H2O = nonanoate + NADH + 2 H(+). It catalyses the reaction hexadecanoate + NADH + 2 H(+) = hexadecanal + NAD(+) + H2O. The catalysed reaction is (2E)-octenal + NAD(+) + H2O = (2E)-octenoate + NADH + 2 H(+). It carries out the reaction (E)-non-2-enal + NAD(+) + H2O = (E)-non-2-enoate + NADH + 2 H(+). The enzyme catalyses (E)-4-hydroxynon-2-enal + NAD(+) + H2O = (E)-4-hydroxynon-2-enoate + NADH + 2 H(+). It catalyses the reaction (2E)-hexadecenal + NAD(+) + H2O = (E)-hexadec-2-enoate + NADH + 2 H(+). The catalysed reaction is benzaldehyde + NAD(+) + H2O = benzoate + NADH + 2 H(+). It carries out the reaction an aldehyde + NADP(+) + H2O = a carboxylate + NADPH + 2 H(+). The enzyme catalyses a medium-chain fatty aldehyde + NADP(+) + H2O = a medium-chain fatty acid + NADPH + 2 H(+). It catalyses the reaction hexanal + NADP(+) + H2O = hexanoate + NADPH + 2 H(+). The catalysed reaction is octanal + NADP(+) + H2O = octanoate + NADPH + 2 H(+). It carries out the reaction nonanal + NADP(+) + H2O = nonanoate + NADPH + 2 H(+). The enzyme catalyses (2E)-octenal + NADP(+) + H2O = (2E)-octenoate + NADPH + 2 H(+). It catalyses the reaction (E)-non-2-enal + NADP(+) + H2O = (E)-non-2-enoate + NADPH + 2 H(+). The catalysed reaction is (E)-4-hydroxynon-2-enal + NADP(+) + H2O = (E)-4-hydroxynon-2-enoate + NADPH + 2 H(+). It carries out the reaction benzaldehyde + NADP(+) + H2O = benzoate + NADPH + 2 H(+). The protein operates within alcohol metabolism; ethanol degradation; acetate from ethanol: step 2/2. In terms of biological role, oxidizes medium and long chain saturated and unsaturated fatty aldehydes generated in the plasma membrane into non-toxic fatty acids. May have a protective role against the cytotoxicity induced by lipid peroxidation. Short-chain fatty aldehydes are not good substrates. Can use both NADP(+) and NAD(+) as electron acceptor in vitro, however in vivo preference will depend on their tissue levels. Low activity towards acetaldehyde and 3,4-dihydroxyphenylacetaldehyde. Able to metabolize aromatic aldehydes such as benzaldehyde to their acid form. This is Aldehyde dehydrogenase family 3 member B1 (Aldh3b1) from Mus musculus (Mouse).